The following is an 874-amino-acid chain: MKSAEIREAFLRFFEEQGHTRVASSSLIPNNDPTLLFTNAGMNQFKDCFLGAEKRAYTRAVSSQKCVRAGGKHNDLENVGYTARHHTFFEMLGNFSFGDYFKRDAITFAWTFLTSEQWLNLPKEKLWVTVYATDDEAYDIWTKEVGVPAERMVRIGDNKGAPYASDNFWTMGDTGPCGPCTEIFYDHGPDIWGGPPGSPEEDGDRYIEIWNNVFMQFNRTADGVLHPLPAPSVDTGMGLERVSAVLQHVHSNYEIDLFQNLLAAAAKAIGCSNDGQASLKVVADHIRSCGFLIADGVLPSNEGRGYVLRRIIRRACRHGNKLGAKGSFFYQIVAALAAEMGEAFPELKSQQAHIERVLKAEEEQFAKTLEQGLRILEQDLAQLKGDVVPGDVVFKLYDTYGFPMDLTADIARERELTIDEAGFEREMDAQRERARSASAFGMDYNSLVKVDSATEFLGYDATEGQGKIIALYKDGQSVDQLGEGEEGVVVLDRTPFYAESGGQVGDTGFLQAGAARFDVRDTTKTGGAFLHHGVVTSGALVIGSPVEAKVDADVQHATSLNHSATHLLHEALRQVLGEHVQQKGSLVDSQRLRFDFSHFEAVKPEQIKQLEDIVNREIRKNTPVETELTDIETAKAKGAMALFGEKYGDTVRVLSMGGDFSVELCGGIHAKRTGDISLFKIISEGGVASGVRRIEAVTGAAALAYLNAAEEQVKEAAQLVKGNRDNLIDKLSAVLERNRQLEKQLEQLQAKAASAAGDDLSNAAVEVKGAKVLAARLDGQDGKALLALVDQLKNKLGHAVILLGSEHEGKVVLVAGVTKDLSSQLKAGDLMKQAAAAVGGKGGGRPDMAQGGGVDVAALDQALALAVPFAEQGL.

Zn(2+) is bound by residues H562, H566, C665, and H669.

The protein belongs to the class-II aminoacyl-tRNA synthetase family. Zn(2+) serves as cofactor.

The protein localises to the cytoplasm. The catalysed reaction is tRNA(Ala) + L-alanine + ATP = L-alanyl-tRNA(Ala) + AMP + diphosphate. Its function is as follows. Catalyzes the attachment of alanine to tRNA(Ala) in a two-step reaction: alanine is first activated by ATP to form Ala-AMP and then transferred to the acceptor end of tRNA(Ala). Also edits incorrectly charged Ser-tRNA(Ala) and Gly-tRNA(Ala) via its editing domain. The protein is Alanine--tRNA ligase of Pseudomonas putida (strain ATCC 47054 / DSM 6125 / CFBP 8728 / NCIMB 11950 / KT2440).